Here is a 416-residue protein sequence, read N- to C-terminus: Serine/threonine transporter SstT (416 aa).

Helical transmembrane passes span 15–35 (SLVSQILVGLVFGILLAMFMP), 49–69 (VGALKAVAPLLVFVLVMAAII), 82–102 (ILLLYLLGTFLAAAVAVVASF), 141–161 (ALLDANYIGILAWAIGLGIAM), 192–212 (LGILGLVASTLAETGFDALFG), 217–237 (LVVLIGCMLFIAFVVNPLIVF), 288–308 (VSIPLGATINMAGAAITITVL), 316–336 (LGMEVDLATAILLSVVATISA), and 363–383 (IAMQVVAVGFIIGVLQDSAET).

It belongs to the dicarboxylate/amino acid:cation symporter (DAACS) (TC 2.A.23) family.

The protein resides in the cell inner membrane. The enzyme catalyses L-serine(in) + Na(+)(in) = L-serine(out) + Na(+)(out). The catalysed reaction is L-threonine(in) + Na(+)(in) = L-threonine(out) + Na(+)(out). Functionally, involved in the import of serine and threonine into the cell, with the concomitant import of sodium (symport system). This is Serine/threonine transporter SstT from Aeromonas hydrophila subsp. hydrophila (strain ATCC 7966 / DSM 30187 / BCRC 13018 / CCUG 14551 / JCM 1027 / KCTC 2358 / NCIMB 9240 / NCTC 8049).